Here is a 210-residue protein sequence, read N- to C-terminus: Dephospho-CoA kinase (210 aa).

Residues 4 to 202 (WVGLTGGIGS…AFYSGIFASK (199 aa)) enclose the DPCK domain. 12 to 17 (GSGKSA) contributes to the ATP binding site.

The protein belongs to the CoaE family.

It localises to the cytoplasm. The catalysed reaction is 3'-dephospho-CoA + ATP = ADP + CoA + H(+). The protein operates within cofactor biosynthesis; coenzyme A biosynthesis; CoA from (R)-pantothenate: step 5/5. Its function is as follows. Catalyzes the phosphorylation of the 3'-hydroxyl group of dephosphocoenzyme A to form coenzyme A. In Neisseria gonorrhoeae (strain ATCC 700825 / FA 1090), this protein is Dephospho-CoA kinase.